We begin with the raw amino-acid sequence, 333 residues long: Anthranilate phosphoribosyltransferase (333 aa).

5-phospho-alpha-D-ribose 1-diphosphate-binding positions include glycine 80, glycine 83 to aspartate 84, threonine 88, asparagine 90 to threonine 93, lysine 108 to glycine 116, and serine 120. Glycine 80 contacts anthranilate. Residue serine 92 participates in Mg(2+) binding. An anthranilate-binding site is contributed by asparagine 111. Arginine 166 contributes to the anthranilate binding site. Aspartate 224 and glutamate 225 together coordinate Mg(2+).

It belongs to the anthranilate phosphoribosyltransferase family. As to quaternary structure, homodimer. Requires Mg(2+) as cofactor.

The enzyme catalyses N-(5-phospho-beta-D-ribosyl)anthranilate + diphosphate = 5-phospho-alpha-D-ribose 1-diphosphate + anthranilate. Its pathway is amino-acid biosynthesis; L-tryptophan biosynthesis; L-tryptophan from chorismate: step 2/5. Catalyzes the transfer of the phosphoribosyl group of 5-phosphorylribose-1-pyrophosphate (PRPP) to anthranilate to yield N-(5'-phosphoribosyl)-anthranilate (PRA). This is Anthranilate phosphoribosyltransferase from Pyrobaculum aerophilum (strain ATCC 51768 / DSM 7523 / JCM 9630 / CIP 104966 / NBRC 100827 / IM2).